We begin with the raw amino-acid sequence, 620 residues long: Glutathione-regulated potassium-efflux system protein KefC (620 aa).

The Periplasmic segment spans residues 1-3 (MDS). The chain crosses the membrane as a helical span at residues 4–24 (HTLVQALIYLGSAALIVPIAV). Residue R25 is a topological domain, cytoplasmic. Residues 26–46 (LGLGSVLGYLIAGCIIGPWGL) traverse the membrane as a helical segment. Residues 47 to 53 (RLVTDAE) are Periplasmic-facing. The helical transmembrane segment at 54-74 (SILHFAEIGVVLMLFIIGLEL) threads the bilayer. Residues 75 to 89 (DPQRLWKLRAAVFGG) are Cytoplasmic-facing. A helical transmembrane segment spans residues 90 to 110 (GALQMVICGGLLGLFCMLLGL). The Periplasmic segment spans residues 111–113 (RWQ). The helical transmembrane segment at 114-134 (VAELIGMTLALSSTAIAMQAM) threads the bilayer. Topologically, residues 135–148 (NERNLMVTQMGRSA) are cytoplasmic. The chain crosses the membrane as a helical span at residues 149–169 (FAVLLFQDIAAIPLVAMIPLL). Topologically, residues 170–177 (AASSASTT) are periplasmic. The chain crosses the membrane as a helical span at residues 178–198 (MGAFALSALKVAGALVLVVLL). At 199-213 (GRYVTRPALRFVARS) the chain is on the cytoplasmic side. A helical transmembrane segment spans residues 214–233 (GLREVFSAVALFLVFGFGLL). Over 234–236 (LEE) the chain is Periplasmic. A helical membrane pass occupies residues 237 to 254 (VGLSMAMGAFLAGVLLAS). Residues 255 to 269 (SEYRHALESDIEPFK) lie on the Cytoplasmic side of the membrane. Residues 270–290 (GLLLGLFFIGVGMSIDFGTLI) traverse the membrane as a helical segment. Residues 291–293 (ENP) lie on the Periplasmic side of the membrane. Residues 294–314 (LRIVILLLGFLIIKIAMLWLI) form a helical membrane-spanning segment. At 315–326 (ARPLQVPNKQRR) the chain is on the cytoplasmic side. A helical membrane pass occupies residues 327 to 347 (WFAVLLGQGSEFAFVVFGAAQ). The Periplasmic portion of the chain corresponds to 348–358 (MANVLEPEWAK). Residues 359–379 (SLTLAVALSMAATPILLVILN) traverse the membrane as a helical segment. Topologically, residues 380 to 620 (RLEQSSTEEA…ADEPETKPSS (241 aa)) are cytoplasmic. In terms of domain architecture, RCK N-terminal spans 399–518 (QPRVIIAGFG…AGVEKPERET (120 aa)). The tract at residues 597 to 620 (GWQGTEEGKHTGNMADEPETKPSS) is disordered.

The protein belongs to the monovalent cation:proton antiporter 2 (CPA2) transporter (TC 2.A.37) family. KefC subfamily. In terms of assembly, homodimer. Interacts with the regulatory subunit KefF.

The protein resides in the cell inner membrane. Its function is as follows. Pore-forming subunit of a potassium efflux system that confers protection against electrophiles. Catalyzes K(+)/H(+) antiport. This is Glutathione-regulated potassium-efflux system protein KefC from Shigella flexneri.